Reading from the N-terminus, the 146-residue chain is MAILGIGTDIVEIARIHTVLVRCGERFIDRILSPIEYKQYHQQNNSVHFLAKRFAVKEAAAKALGTGICHGIAFVQFELFHDERGKPQLRLHEQAAQLARERHITRMHVTLADERYYTCAMVIFEGDIRSNDYSIQPNWYLSKIKP.

Asp9 and Glu58 together coordinate Mg(2+).

Belongs to the P-Pant transferase superfamily. AcpS family. Mg(2+) serves as cofactor.

Its subcellular location is the cytoplasm. It catalyses the reaction apo-[ACP] + CoA = holo-[ACP] + adenosine 3',5'-bisphosphate + H(+). Functionally, transfers the 4'-phosphopantetheine moiety from coenzyme A to a Ser of acyl-carrier-protein. This Baumannia cicadellinicola subsp. Homalodisca coagulata protein is Holo-[acyl-carrier-protein] synthase.